A 122-amino-acid polypeptide reads, in one-letter code: Aspartate 1-decarboxylase (122 aa).

The Schiff-base intermediate with substrate; via pyruvic acid role is filled by serine 25. Residue serine 25 is modified to Pyruvic acid (Ser). Threonine 57 contacts substrate. The active-site Proton donor is tyrosine 58. 73–75 (GAA) serves as a coordination point for substrate.

It belongs to the PanD family. Heterooctamer of four alpha and four beta subunits. The cofactor is pyruvate. Post-translationally, is synthesized initially as an inactive proenzyme, which is activated by self-cleavage at a specific serine bond to produce a beta-subunit with a hydroxyl group at its C-terminus and an alpha-subunit with a pyruvoyl group at its N-terminus.

The protein localises to the cytoplasm. It carries out the reaction L-aspartate + H(+) = beta-alanine + CO2. It functions in the pathway cofactor biosynthesis; (R)-pantothenate biosynthesis; beta-alanine from L-aspartate: step 1/1. Functionally, catalyzes the pyruvoyl-dependent decarboxylation of aspartate to produce beta-alanine. The protein is Aspartate 1-decarboxylase of Bordetella pertussis (strain Tohama I / ATCC BAA-589 / NCTC 13251).